Consider the following 1023-residue polypeptide: Probable beta-glucosidase E (1023 aa).

Residues 1 to 51 (MPKSYTPVHDSIPEEDHFSSDDESNFRLHRIDRSASRSQSPKENEGEPSIL) form a disordered region. Residues 1 to 128 (MPKSYTPVHD…AVYYSKTWWR (128 aa)) are Cytoplasmic-facing. The span at 11–45 (SIPEEDHFSSDDESNFRLHRIDRSASRSQSPKENE) shows a compositional bias: basic and acidic residues. A helical; Signal-anchor for type II membrane protein membrane pass occupies residues 129 to 149 (TLVVVIIALGLLVWGFLKYAS). Topologically, residues 150–1023 (TRGDIWEEYD…NLPLGKPFDP (874 aa)) are extracellular. 2 N-linked (GlcNAc...) asparagine glycosylation sites follow: N199 and N387. The active site involves D415. Residues N458 and N497 are each glycosylated (N-linked (GlcNAc...) asparagine). 2 disordered regions span residues 485-515 (WESP…GSPG) and 822-841 (NPSR…PSYD). Over residues 827 to 838 (PAARPPDAVAPP) the composition is skewed to low complexity. N848 carries an N-linked (GlcNAc...) asparagine glycan. The interval 873 to 909 (ATTPPPPNPEASGSATDQKPHRTKPSDAGGGAGGNPS) is disordered. 2 N-linked (GlcNAc...) asparagine glycosylation sites follow: N964 and N979.

It belongs to the glycosyl hydrolase 3 family.

The protein localises to the cell membrane. It carries out the reaction Hydrolysis of terminal, non-reducing beta-D-glucosyl residues with release of beta-D-glucose.. Its pathway is glycan metabolism; cellulose degradation. Functionally, beta-glucosidases are one of a number of cellulolytic enzymes involved in the degradation of cellulosic biomass. Catalyzes the last step releasing glucose from the inhibitory cellobiose. This Emericella nidulans (strain FGSC A4 / ATCC 38163 / CBS 112.46 / NRRL 194 / M139) (Aspergillus nidulans) protein is Probable beta-glucosidase E (bglE).